A 245-amino-acid polypeptide reads, in one-letter code: tRNA pseudouridine synthase A (245 aa).

Aspartate 52 serves as the catalytic Nucleophile. Tyrosine 112 provides a ligand contact to substrate.

This sequence belongs to the tRNA pseudouridine synthase TruA family. As to quaternary structure, homodimer.

The catalysed reaction is uridine(38/39/40) in tRNA = pseudouridine(38/39/40) in tRNA. Its function is as follows. Formation of pseudouridine at positions 38, 39 and 40 in the anticodon stem and loop of transfer RNAs. The chain is tRNA pseudouridine synthase A from Dictyoglomus thermophilum (strain ATCC 35947 / DSM 3960 / H-6-12).